The following is a 161-amino-acid chain: MPSFDVVSEVDMQEVDNALHTTVKEITTRYDFKGSKASMERKEKEIILVAEDEYKLGQMIDLLSARLVKRGVDLKALEVGKVAAAAGGMERQVLSLKVGLETEVSKRMIKFLKDGKFKAQGSIQGDQLRVSGKSRDELQAAIAALRGHDFGLPVQFTNFRD.

This sequence belongs to the YajQ family.

Its function is as follows. Nucleotide-binding protein. The protein is Nucleotide-binding protein Lferr_1091 of Acidithiobacillus ferrooxidans (strain ATCC 53993 / BNL-5-31) (Leptospirillum ferrooxidans (ATCC 53993)).